Here is a 246-residue protein sequence, read N- to C-terminus: 3-deoxy-manno-octulosonate cytidylyltransferase (246 aa).

Belongs to the KdsB family.

It localises to the cytoplasm. The catalysed reaction is 3-deoxy-alpha-D-manno-oct-2-ulosonate + CTP = CMP-3-deoxy-beta-D-manno-octulosonate + diphosphate. It participates in nucleotide-sugar biosynthesis; CMP-3-deoxy-D-manno-octulosonate biosynthesis; CMP-3-deoxy-D-manno-octulosonate from 3-deoxy-D-manno-octulosonate and CTP: step 1/1. Its pathway is bacterial outer membrane biogenesis; lipopolysaccharide biosynthesis. Functionally, activates KDO (a required 8-carbon sugar) for incorporation into bacterial lipopolysaccharide in Gram-negative bacteria. The chain is 3-deoxy-manno-octulosonate cytidylyltransferase from Myxococcus xanthus (strain DK1622).